Reading from the N-terminus, the 366-residue chain is RISC-loading complex subunit TARBP2 (366 aa).

3 sufficient for interaction with PRKRA regions span residues 22 to 105 (MLAA…EPAL), 152 to 234 (SPQQ…DARD), and 287 to 366 (LGAL…AGSK). Positions 30–97 (TPISLLQEYG…AEVALKHLKG (68 aa)) constitute a DRBM 1 domain. A Phosphoserine modification is found at S152. DRBM domains are found at residues 159–227 (NPVG…RVHT) and 293–361 (ACCR…YLKI). Residues 228-366 (VPLDARDGNE…QYLKIMAGSK (139 aa)) are sufficient for interaction with DICER1.

Belongs to the TARBP2 family. In terms of assembly, self-associates. Component of the RISC loading complex (RLC), or micro-RNA (miRNA) loading complex (miRLC), which is composed of DICER1, AGO2 and TARBP2. Note that the trimeric RLC/miRLC is also referred to as RISC. Interacts with EIF2AK2/PKR and inhibits its protein kinase activity. Interacts with DHX9 and PRKRA. Interacts with DICER1, AGO2, MOV10, EIF6 and RPL7A (60S ribosome subunit); they form a large RNA-induced silencing complex (RISC). Interacts with IRF7; this interaction prevents IRF7 phosphorylation and activation. As to quaternary structure, (Microbial infection) Interacts with FTSJ3; forms a complex with FTSJ3 and HIV-1 TAR RNA. (Microbial infection) Interacts with ebolavirus VP30; this interaction, which occurs only in the presence of siRNA, prevents TARBP2 binding to DICER1 and thus allows the virus to counteract host RNA silencing. In terms of assembly, (Microbial infection) Interacts with ebolavirus VP35; this interaction prevents TARBP2 binding to DICER1 and thus allows the virus to counteract host RNA silencing.

It localises to the cytoplasm. It is found in the perinuclear region. The protein localises to the nucleus. In terms of biological role, required for formation of the RNA induced silencing complex (RISC). Component of the RISC loading complex (RLC), also known as the micro-RNA (miRNA) loading complex (miRLC), which is composed of DICER1, AGO2 and TARBP2. Within the RLC/miRLC, DICER1 and TARBP2 are required to process precursor miRNAs (pre-miRNAs) to mature miRNAs and then load them onto AGO2. AGO2 bound to the mature miRNA constitutes the minimal RISC and may subsequently dissociate from DICER1 and TARBP2. May also play a role in the production of short interfering RNAs (siRNAs) from double-stranded RNA (dsRNA) by DICER1. Binds in vitro to the PRM1 3'-UTR. Seems to act as a repressor of translation. For some pre-miRNA substrates, may also alter the choice of cleavage site by DICER1. Negatively regulates IRF7-mediated IFN-beta signaling triggered by viral infection by inhibiting the phosphorylation of IRF7 and promoting its 'Lys'-48-linked ubiquitination and degradation. (Microbial infection) Binds to the HIV-1 TAR RNA which is located in the long terminal repeat (LTR) of HIV-1, and stimulates translation of TAR-containing RNAs. This is achieved in part at least by binding to and inhibiting EIF2AK2/PKR, thereby reducing phosphorylation and inhibition of EIF2S1/eIF-2-alpha. May also promote translation of TAR-containing RNAs independently of EIF2AK2/PKR. Mediates recruitment of FTSJ3 methyltransferase to HIV-1 RNA, leading to 2'-O-methylation of the viral genome, allowing HIV-1 to escape the innate immune system. In Homo sapiens (Human), this protein is RISC-loading complex subunit TARBP2.